A 98-amino-acid chain; its full sequence is Large ribosomal subunit protein uL23 (98 aa).

The protein belongs to the universal ribosomal protein uL23 family. Part of the 50S ribosomal subunit. Contacts protein L29, and trigger factor when it is bound to the ribosome.

In terms of biological role, one of the early assembly proteins it binds 23S rRNA. One of the proteins that surrounds the polypeptide exit tunnel on the outside of the ribosome. Forms the main docking site for trigger factor binding to the ribosome. This is Large ribosomal subunit protein uL23 from Methylorubrum populi (strain ATCC BAA-705 / NCIMB 13946 / BJ001) (Methylobacterium populi).